A 185-amino-acid chain; its full sequence is Ribosome-recycling factor (185 aa).

It belongs to the RRF family.

The protein localises to the cytoplasm. Its function is as follows. Responsible for the release of ribosomes from messenger RNA at the termination of protein biosynthesis. May increase the efficiency of translation by recycling ribosomes from one round of translation to another. In Campylobacter concisus (strain 13826), this protein is Ribosome-recycling factor.